Reading from the N-terminus, the 320-residue chain is MHQTKTGILLANLGTPDAPTPGAVKRYLRQFLSDKRVVDTSRLLWWPLLRGVILPIRSPRVAKLYQSVWMEEGSPLMVYSRRQQQALAARLPDTPVALGMSYGSPSLASAVDDLLAQGVGHIVVLPLYPQYSCSTVAAVWDELARILAKKRAIPGISFIRDYADHPDYIHALAASVRASFAVHGEPDLLLLSYHGIPQRYANQGDDYPQRCRDTTRELVSALGLPPERVMMTFQSRFGREPWLTPYTDETLKMLGEQGTKHIQVLCPGFAADCLETLEEIAVQNREVFLEAGGEQYEYIPALNADVAHIEMMVNLTAPYR.

Residues His194 and Glu275 each coordinate Fe cation.

The protein belongs to the ferrochelatase family.

It localises to the cytoplasm. It carries out the reaction heme b + 2 H(+) = protoporphyrin IX + Fe(2+). It functions in the pathway porphyrin-containing compound metabolism; protoheme biosynthesis; protoheme from protoporphyrin-IX: step 1/1. In terms of biological role, catalyzes the ferrous insertion into protoporphyrin IX. In Klebsiella pneumoniae (strain 342), this protein is Ferrochelatase.